The sequence spans 98 residues: Cystatin-B (98 aa).

Position 1 is an N-acetylmethionine (Met-1). The Secondary area of contact motif lies at 46 to 50; sequence QVVAG.

The protein belongs to the cystatin family. As to quaternary structure, able to form dimers stabilized by noncovalent forces.

It is found in the cytoplasm. The protein resides in the nucleus. In terms of biological role, this is an intracellular thiol proteinase inhibitor. Tightly binding reversible inhibitor of cathepsins L, H and B. This is Cystatin-B (CSTB) from Pan troglodytes (Chimpanzee).